The following is a 464-amino-acid chain: Dolichyl-diphosphooligosaccharide--protein glycosyltransferase subunit 1B (464 aa).

A signal peptide spans 1 to 24 (MAARIGIFSVFVAVLLSISAFSSA). The Lumenal portion of the chain corresponds to 25–436 (QDLQIVNAER…TFKPIYMLAE (412 aa)). 2 N-linked (GlcNAc...) asparagine glycosylation sites follow: Asn-106 and Asn-298. Lys-310 participates in a covalent cross-link: Glycyl lysine isopeptide (Lys-Gly) (interchain with G-Cter in ubiquitin). Asn-352 carries N-linked (GlcNAc...) asparagine glycosylation. The chain crosses the membrane as a helical span at residues 437–457 (PFMLVSAFFLVFVASLAYVHI). Topologically, residues 458-464 (DLNIVRK) are cytoplasmic.

This sequence belongs to the OST1 family. In terms of assembly, component of the oligosaccharyltransferase (OST) complex.

The protein resides in the endoplasmic reticulum membrane. Its pathway is protein modification; protein glycosylation. Its function is as follows. Subunit of the oligosaccharyl transferase (OST) complex that catalyzes the initial transfer of a defined glycan (Glc(3)Man(9)GlcNAc(2) in eukaryotes) from the lipid carrier dolichol-pyrophosphate to an asparagine residue within an Asn-X-Ser/Thr consensus motif in nascent polypeptide chains, the first step in protein N-glycosylation. N-glycosylation occurs cotranslationally and the complex associates with the Sec61 complex at the channel-forming translocon complex that mediates protein translocation across the endoplasmic reticulum (ER). All subunits are required for a maximal enzyme activity. This is Dolichyl-diphosphooligosaccharide--protein glycosyltransferase subunit 1B (OST1B) from Arabidopsis thaliana (Mouse-ear cress).